The sequence spans 421 residues: Histidine--tRNA ligase (421 aa).

The protein belongs to the class-II aminoacyl-tRNA synthetase family. In terms of assembly, homodimer.

The protein resides in the cytoplasm. The catalysed reaction is tRNA(His) + L-histidine + ATP = L-histidyl-tRNA(His) + AMP + diphosphate + H(+). The sequence is that of Histidine--tRNA ligase from Francisella tularensis subsp. tularensis (strain SCHU S4 / Schu 4).